The following is a 565-amino-acid chain: Glucose-6-phosphate isomerase (565 aa).

The Proton donor role is filled by E373. Residues H404 and K530 contribute to the active site.

This sequence belongs to the GPI family.

It is found in the cytoplasm. The enzyme catalyses alpha-D-glucose 6-phosphate = beta-D-fructose 6-phosphate. It participates in carbohydrate biosynthesis; gluconeogenesis. It functions in the pathway carbohydrate degradation; glycolysis; D-glyceraldehyde 3-phosphate and glycerone phosphate from D-glucose: step 2/4. Functionally, catalyzes the reversible isomerization of glucose-6-phosphate to fructose-6-phosphate. This is Glucose-6-phosphate isomerase from Corynebacterium jeikeium (strain K411).